The sequence spans 1067 residues: Probable isoleucine--tRNA ligase, cytoplasmic (1067 aa).

A 'HIGH' region motif is present at residues Pro47–His57. The 'KMSKS' region motif lies at Lys604 to Arg608. Position 607 (Lys607) interacts with ATP.

The protein belongs to the class-I aminoacyl-tRNA synthetase family.

It is found in the cytoplasm. It catalyses the reaction tRNA(Ile) + L-isoleucine + ATP = L-isoleucyl-tRNA(Ile) + AMP + diphosphate. The sequence is that of Probable isoleucine--tRNA ligase, cytoplasmic (ileS) from Dictyostelium discoideum (Social amoeba).